A 365-amino-acid chain; its full sequence is Isopentenyl-diphosphate delta-isomerase (365 aa).

4 to 5 is a binding site for substrate; that stretch reads RK. Residues 62 to 64, S92, and N121 each bind FMN; that span reads GMT. 92 to 94 provides a ligand contact to substrate; that stretch reads SQR. Q155 contributes to the substrate binding site. E156 lines the Mg(2+) pocket. Residues K187, T216, 267–269, and 288–289 contribute to the FMN site; these read GVR and AL.

The protein belongs to the IPP isomerase type 2 family. As to quaternary structure, homooctamer. Dimer of tetramers. FMN is required as a cofactor. NADPH serves as cofactor. It depends on Mg(2+) as a cofactor.

The protein resides in the cytoplasm. It catalyses the reaction isopentenyl diphosphate = dimethylallyl diphosphate. In terms of biological role, involved in the biosynthesis of isoprenoids. Catalyzes the 1,3-allylic rearrangement of the homoallylic substrate isopentenyl (IPP) to its allylic isomer, dimethylallyl diphosphate (DMAPP). This Methanopyrus kandleri (strain AV19 / DSM 6324 / JCM 9639 / NBRC 100938) protein is Isopentenyl-diphosphate delta-isomerase.